The sequence spans 468 residues: Proline--tRNA ligase (468 aa).

It belongs to the class-II aminoacyl-tRNA synthetase family. ProS type 3 subfamily. Homodimer.

It is found in the cytoplasm. It catalyses the reaction tRNA(Pro) + L-proline + ATP = L-prolyl-tRNA(Pro) + AMP + diphosphate. In terms of biological role, catalyzes the attachment of proline to tRNA(Pro) in a two-step reaction: proline is first activated by ATP to form Pro-AMP and then transferred to the acceptor end of tRNA(Pro). The protein is Proline--tRNA ligase of Frankia alni (strain DSM 45986 / CECT 9034 / ACN14a).